A 163-amino-acid chain; its full sequence is MSALAQAAKSLLLKEFFGAVVLSMRQFFAPKATLNYPHEKGPLSPRFRGEHALRRYPNGEERCIACKLCEAICPAQAITIEAGPRRNDGTRRTVRYDIDMVKCIYCGFCQEACPVDAIVEGPNFEFATETREELYYDKDKLLANGDRWERELARNIALDAPYR.

2 consecutive 4Fe-4S ferredoxin-type domains span residues 53-83 and 94-123; these read LRRY…IEAG and VRYD…EGPN. 8 residues coordinate [4Fe-4S] cluster: cysteine 63, cysteine 66, cysteine 69, cysteine 73, cysteine 103, cysteine 106, cysteine 109, and cysteine 113.

It belongs to the complex I 23 kDa subunit family. NDH-1 is composed of 14 different subunits. Subunits NuoA, H, J, K, L, M, N constitute the membrane sector of the complex. The cofactor is [4Fe-4S] cluster.

The protein resides in the cell inner membrane. The catalysed reaction is a quinone + NADH + 5 H(+)(in) = a quinol + NAD(+) + 4 H(+)(out). NDH-1 shuttles electrons from NADH, via FMN and iron-sulfur (Fe-S) centers, to quinones in the respiratory chain. The immediate electron acceptor for the enzyme in this species is believed to be ubiquinone. Couples the redox reaction to proton translocation (for every two electrons transferred, four hydrogen ions are translocated across the cytoplasmic membrane), and thus conserves the redox energy in a proton gradient. This chain is NADH-quinone oxidoreductase subunit I, found in Chelativorans sp. (strain BNC1).